Reading from the N-terminus, the 453-residue chain is Serine/threonine-protein phosphatase 2A 55 kDa regulatory subunit B delta isoform (453 aa).

4 WD repeats span residues 32 to 71 (AEADIISTVEFNYSGDLLATGDKGGRVVIFQREQENKGRA), 97 to 138 (EIEE…KRAE), 181 to 219 (AHTYHINSISVNSDHETYLSADDLRINLWHLEITDRSFN), and 230 to 270 (ELTE…LCDR). Ser-285 bears the Phosphoserine mark. WD repeat units follow at residues 289-327 (EIISSISDVKFSHSGRYMMTRDYLSVKVWDLNMEGRPVE), 344-385 (ENDC…DVTL), and 420-452 (DFNKKILHTAWHPMESIIAVAATNNLYIFQDKI). A Phosphotyrosine modification is found at Tyr-305. Thr-308 is modified (phosphothreonine). Positions 385-406 (LEASRENSKPRASLKPRKVCSG) are disordered.

It belongs to the phosphatase 2A regulatory subunit B family. PP2A consists of a common heterodimeric core enzyme, composed of a 36 kDa catalytic subunit (subunit C) and a 65 kDa constant regulatory subunit (PR65 or subunit A), that associates with a variety of regulatory subunits. Proteins that associate with the core dimer include three families of regulatory subunits B (the R2/B/PR55/B55, R3/B''/PR72/PR130/PR59 and R5/B'/B56 families), the 48 kDa variable regulatory subunit, viral proteins, and cell signaling molecules. Interacts with ENSA (when phosphorylated at 'Ser-67') and ARPP19 (when phosphorylated at 'Ser-62'), leading to inhibit PP2A activity. Interacts with IER5. Widely expressed with high levels in brain, heart, placenta, skeletal muscle, testis, thymus and spleen.

It is found in the cytoplasm. In terms of biological role, substrate-recognition subunit of protein phosphatase 2A (PP2A) that plays a key role in cell cycle by controlling mitosis entry and exit. Involved in chromosome clustering during late mitosis by mediating dephosphorylation of MKI67. The activity of PP2A complexes containing PPP2R2D (PR55-delta) fluctuate during the cell cycle: the activity is high in interphase and low in mitosis. The polypeptide is Serine/threonine-protein phosphatase 2A 55 kDa regulatory subunit B delta isoform (Ppp2r2d) (Rattus norvegicus (Rat)).